A 222-amino-acid chain; its full sequence is 3,4-dihydroxy-2-butanone 4-phosphate synthase (222 aa).

D-ribulose 5-phosphate-binding positions include 37–38, Asp-42, 150–154, and Glu-174; these read RE and RPGHT. Glu-38 contacts Mg(2+). Mg(2+) is bound at residue His-153.

This sequence belongs to the DHBP synthase family. As to quaternary structure, homodimer. The cofactor is Mg(2+). Mn(2+) serves as cofactor.

The enzyme catalyses D-ribulose 5-phosphate = (2S)-2-hydroxy-3-oxobutyl phosphate + formate + H(+). It functions in the pathway cofactor biosynthesis; riboflavin biosynthesis; 2-hydroxy-3-oxobutyl phosphate from D-ribulose 5-phosphate: step 1/1. Catalyzes the conversion of D-ribulose 5-phosphate to formate and 3,4-dihydroxy-2-butanone 4-phosphate. This chain is 3,4-dihydroxy-2-butanone 4-phosphate synthase, found in Chlorobium limicola (strain DSM 245 / NBRC 103803 / 6330).